The sequence spans 100 residues: NADH-quinone oxidoreductase subunit K (100 aa).

3 helical membrane-spanning segments follow: residues 3–23 (PTAYYVALSGLLFAIGMIGVL), 29–49 (IMIFLSVELMLNAANLALVAF), and 63–83 (FIVMTLAAAEVAIGLAIIVAI).

It belongs to the complex I subunit 4L family. In terms of assembly, NDH-1 is composed of 15 different subunits. Subunits NuoA, H, J, K, L, M, N constitute the membrane sector of the complex.

Its subcellular location is the cell membrane. It carries out the reaction a quinone + NADH + 5 H(+)(in) = a quinol + NAD(+) + 4 H(+)(out). In terms of biological role, NDH-1 shuttles electrons from NADH, via FMN and iron-sulfur (Fe-S) centers, to quinones in the respiratory chain. The immediate electron acceptor for the enzyme in this species is believed to be a menaquinone. Couples the redox reaction to proton translocation (for every two electrons transferred, four hydrogen ions are translocated across the cytoplasmic membrane), and thus conserves the redox energy in a proton gradient. This Deinococcus geothermalis (strain DSM 11300 / CIP 105573 / AG-3a) protein is NADH-quinone oxidoreductase subunit K.